The primary structure comprises 225 residues: Phosphatidylserine decarboxylase proenzyme (225 aa).

Catalysis depends on Ser-189, which acts as the Schiff-base intermediate with substrate; via pyruvic acid. The residue at position 189 (Ser-189) is a Pyruvic acid (Ser); by autocatalysis.

The protein belongs to the phosphatidylserine decarboxylase family. PSD-A subfamily. In terms of assembly, heterodimer of a large membrane-associated beta subunit and a small pyruvoyl-containing alpha subunit. Pyruvate serves as cofactor. Post-translationally, is synthesized initially as an inactive proenzyme. Formation of the active enzyme involves a self-maturation process in which the active site pyruvoyl group is generated from an internal serine residue via an autocatalytic post-translational modification. Two non-identical subunits are generated from the proenzyme in this reaction, and the pyruvate is formed at the N-terminus of the alpha chain, which is derived from the carboxyl end of the proenzyme. The post-translation cleavage follows an unusual pathway, termed non-hydrolytic serinolysis, in which the side chain hydroxyl group of the serine supplies its oxygen atom to form the C-terminus of the beta chain, while the remainder of the serine residue undergoes an oxidative deamination to produce ammonia and the pyruvoyl prosthetic group on the alpha chain.

The protein resides in the cell membrane. It carries out the reaction a 1,2-diacyl-sn-glycero-3-phospho-L-serine + H(+) = a 1,2-diacyl-sn-glycero-3-phosphoethanolamine + CO2. Its pathway is phospholipid metabolism; phosphatidylethanolamine biosynthesis; phosphatidylethanolamine from CDP-diacylglycerol: step 2/2. Catalyzes the formation of phosphatidylethanolamine (PtdEtn) from phosphatidylserine (PtdSer). The protein is Phosphatidylserine decarboxylase proenzyme of Amoebophilus asiaticus (strain 5a2).